The following is a 362-amino-acid chain: Putative RING-H2 finger protein ATL21B (362 aa).

The first 23 residues, 1 to 23 (MIISKQLFLLFFLLFFIFPLRHA), serve as a signal peptide directing secretion. Residues 234–254 (VVAVLICLSIIGAVILFVTCI) traverse the membrane as a helical segment. The RING-type; atypical zinc-finger motif lies at 316-358 (CPICLSEYVSKETVRFIPECDHCFHAKCIDVWLKIHGSCPLCR).

The protein belongs to the RING-type zinc finger family. ATL subfamily.

It is found in the membrane. It carries out the reaction S-ubiquitinyl-[E2 ubiquitin-conjugating enzyme]-L-cysteine + [acceptor protein]-L-lysine = [E2 ubiquitin-conjugating enzyme]-L-cysteine + N(6)-ubiquitinyl-[acceptor protein]-L-lysine.. The protein operates within protein modification; protein ubiquitination. This is Putative RING-H2 finger protein ATL21B (ATL21B) from Arabidopsis thaliana (Mouse-ear cress).